The primary structure comprises 313 residues: Ester hydrolase C11orf54 homolog (313 aa).

Zn(2+)-binding residues include histidine 264, histidine 266, and histidine 276.

As to quaternary structure, monomer. Zn(2+) is required as a cofactor.

The protein localises to the nucleus. The protein resides in the cytoplasm. Its function is as follows. Exhibits ester hydrolase activity on the substrate p-nitrophenyl acetate, in vitro. May regulate DNA damage and repair by regulating HIF1A degradation via chaperone-mediated autophagy (CMA). The sequence is that of Ester hydrolase C11orf54 homolog from Xenopus tropicalis (Western clawed frog).